The sequence spans 116 residues: Protein Wnt-5b (116 aa).

S1 carries O-palmitoleoyl serine; by PORCN lipidation. N-linked (GlcNAc...) asparagine glycans are attached at residues N69 and N83. A disulfide bond links C82 and C97.

The protein belongs to the Wnt family. In terms of processing, palmitoleoylation is required for efficient binding to frizzled receptors. Depalmitoleoylation leads to Wnt signaling pathway inhibition.

Its subcellular location is the secreted. The protein localises to the extracellular space. It is found in the extracellular matrix. Functionally, ligand for members of the frizzled family of seven transmembrane receptors. Probable developmental protein. May be a signaling molecule which affects the development of discrete regions of tissues. Is likely to signal over only few cell diameters. The chain is Protein Wnt-5b (WNT-5B) from Plestiodon skiltonianus (Western skink).